The chain runs to 637 residues: Threonine--tRNA ligase (637 aa).

Positions 1–61 (MIKVTLKDGK…DKDCNLEILT (61 aa)) constitute a TGS domain. Positions 242-532 (DHRKIGKELD…LIEHYAGAFP (291 aa)) are catalytic. Residues C333, H384, and H509 each contribute to the Zn(2+) site.

This sequence belongs to the class-II aminoacyl-tRNA synthetase family. In terms of assembly, homodimer. Requires Zn(2+) as cofactor.

It localises to the cytoplasm. The enzyme catalyses tRNA(Thr) + L-threonine + ATP = L-threonyl-tRNA(Thr) + AMP + diphosphate + H(+). Catalyzes the attachment of threonine to tRNA(Thr) in a two-step reaction: L-threonine is first activated by ATP to form Thr-AMP and then transferred to the acceptor end of tRNA(Thr). Also edits incorrectly charged L-seryl-tRNA(Thr). The chain is Threonine--tRNA ligase from Clostridium acetobutylicum (strain ATCC 824 / DSM 792 / JCM 1419 / IAM 19013 / LMG 5710 / NBRC 13948 / NRRL B-527 / VKM B-1787 / 2291 / W).